Reading from the N-terminus, the 248-residue chain is DNA/RNA-binding protein ALBA1 (248 aa).

The interval 217–248 (GRDGGYRGGNRGGSRSGFRGGRGGFRGGRALS) is disordered. Residues 222-248 (YRGGNRGGSRSGFRGGRGGFRGGRALS) are compositionally biased toward gly residues.

Belongs to the histone-like Alba family. In terms of assembly, may form homodimers. Identified in a TARE6-associated complex consisting of over 30 proteins and including ALBA1, ALBA2 and ALBA4; the complex binds to the non-coding subtelomeric repeat region TARE6.

Its subcellular location is the nucleus. It localises to the chromosome. The protein resides in the telomere. It is found in the cytoplasm. In terms of biological role, possesses DNA- and RNA-binding activities. During the asexual blood stages binds to a sub-population of mature mRNAs and regulates the timing of their translation. Binds to DNA with relaxed sequence specificity. Associates with the subtelomeric TARE6 repeats. In Plasmodium falciparum (isolate 3D7), this protein is DNA/RNA-binding protein ALBA1.